The sequence spans 236 residues: Ureidoacrylate amidohydrolase RutB (236 aa).

Asp24 (proton acceptor) is an active-site residue. Lys133 is an active-site residue. The active-site Nucleophile is Cys166.

Belongs to the isochorismatase family. RutB subfamily.

It catalyses the reaction (Z)-3-ureidoacrylate + H2O + H(+) = (Z)-3-aminoacrylate + NH4(+) + CO2. The catalysed reaction is (Z)-3-ureidoacrylate + H2O = (Z)-3-aminoacrylate + carbamate + H(+). It carries out the reaction (Z)-2-methylureidoacrylate + H2O + H(+) = (Z)-2-methylaminoacrylate + NH4(+) + CO2. In terms of biological role, hydrolyzes ureidoacrylate to form aminoacrylate and carbamate. The carbamate hydrolyzes spontaneously, thereby releasing one of the nitrogen atoms of the pyrimidine ring as ammonia and one of its carbon atoms as CO2. This is Ureidoacrylate amidohydrolase RutB from Klebsiella pneumoniae subsp. pneumoniae (strain ATCC 700721 / MGH 78578).